Consider the following 924-residue polypeptide: Probable dipeptidyl-aminopeptidase B (924 aa).

Residues 1–104 are disordered; that stretch reads MPPFTYSDDT…DQRSPGDGQR (104 aa). Residues 1-111 lie on the Cytoplasmic side of the membrane; sequence MPPFTYSDDT…GQRMDRSLRR (111 aa). Basic and acidic residues predominate over residues 9–23; sequence DTLRSGRDRFRDHSP. Residues 31–43 show a composition bias toward polar residues; sequence SQETDSSASTTSI. Composition is skewed to basic and acidic residues over residues 47-58 and 92-104; these read RIQERLDTKEFT and SRSD…DGQR. A helical; Signal-anchor for type II membrane protein membrane pass occupies residues 112–132; sequence WLFIVSGVLVATWVIGLFVFV. The Vacuolar segment spans residues 133 to 924; the sequence is SSKAYKPSSS…GMKKRAAPTA (792 aa). N-linked (GlcNAc...) asparagine glycosylation is found at Asn231 and Asn364. The active-site Charge relay system is the Ser768. A glycan (N-linked (GlcNAc...) asparagine) is linked at Asn827. Residues Asp845 and His878 each act as charge relay system in the active site.

The protein belongs to the peptidase S9B family.

The protein resides in the vacuole membrane. It carries out the reaction Release of an N-terminal dipeptide, Xaa-Yaa-|-Zaa-, from a polypeptide, preferentially when Yaa is Pro, provided Zaa is neither Pro nor hydroxyproline.. Functionally, type IV dipeptidyl-peptidase which removes N-terminal dipeptides sequentially from polypeptides having unsubstituted N-termini provided that the penultimate residue is proline. The polypeptide is Probable dipeptidyl-aminopeptidase B (DAPB) (Sordaria macrospora (strain ATCC MYA-333 / DSM 997 / K(L3346) / K-hell)).